We begin with the raw amino-acid sequence, 399 residues long: Methylthioribose kinase (399 aa).

ATP-binding positions include N40, K57, and 111–113 (EDL). A substrate-binding site is contributed by D229. Residue 246 to 248 (DAE) participates in ATP binding. R344 is a binding site for substrate.

It belongs to the methylthioribose kinase family. Homodimer.

It carries out the reaction 5-(methylsulfanyl)-D-ribose + ATP = 5-(methylsulfanyl)-alpha-D-ribose 1-phosphate + ADP + H(+). The protein operates within amino-acid biosynthesis; L-methionine biosynthesis via salvage pathway; S-methyl-5-thio-alpha-D-ribose 1-phosphate from S-methyl-5'-thioadenosine (hydrolase route): step 2/2. Functionally, catalyzes the phosphorylation of methylthioribose into methylthioribose-1-phosphate. In Yersinia enterocolitica serotype O:8 / biotype 1B (strain NCTC 13174 / 8081), this protein is Methylthioribose kinase.